A 741-amino-acid polypeptide reads, in one-letter code: Homeobox protein AHox1 (741 aa).

Disordered stretches follow at residues 1-30 (MEKMHSKSVSPVPFNNSNNTSLGGLRKSSS), 61-96 (KRRLLDPQNKKKQNRFERYSSSNHAQEQSSEENFCR), 146-183 (VNPLSKYFKPSSNDQLGARRTATSFSSSSEASDSKSCC), 203-226 (ADSDWSEDATGNEADDPDDHINQD), 357-383 (KTEESLRSPSETKQYSPDASTFYPIRT), 476-501 (FDFPPKFGSNNSSTDKPEQEDNNPQT), and 616-642 (QYGHMSSSQNPHSETQNRSEEVRGTVK). Positions 7–19 (KSVSPVPFNNSNN) are enriched in low complexity. Over residues 63 to 78 (RLLDPQNKKKQNRFER) the composition is skewed to basic and acidic residues. A compositionally biased stretch (polar residues) spans 79–92 (YSSSNHAQEQSSEE). Residues 169–181 (SFSSSSEASDSKS) show a composition bias toward low complexity. Residues 363 to 375 (RSPSETKQYSPDA) show a composition bias toward polar residues. The segment covering 616-629 (QYGHMSSSQNPHSE) has biased composition (polar residues). A compositionally biased stretch (basic and acidic residues) spans 630 to 639 (TQNRSEEVRG). Positions 645–704 (RKWNRAVFSLMQRRGLEKSFQSQKYVAKPERRKLADALSLTDAQVKIWFQNRRMKWRQEI) form a DNA-binding region, homeobox. The segment at 722–741 (EIEKEKTQTPSDEGEVINVD) is disordered.

It belongs to the H2.0 homeobox family. As to expression, expressed in the tissues of endodermal origin.

It is found in the nucleus. The chain is Homeobox protein AHox1 (AHOX1) from Halocynthia roretzi (Sea squirt).